We begin with the raw amino-acid sequence, 158 residues long: Regulator of sigma D (158 aa).

This sequence belongs to the Rsd/AlgQ family. As to quaternary structure, interacts with RpoD.

It localises to the cytoplasm. Binds RpoD and negatively regulates RpoD-mediated transcription activation by preventing the interaction between the primary sigma factor RpoD with the catalytic core of the RNA polymerase and with promoter DNA. May be involved in replacement of the RNA polymerase sigma subunit from RpoD to RpoS during the transition from exponential growth to the stationary phase. This chain is Regulator of sigma D, found in Escherichia coli O127:H6 (strain E2348/69 / EPEC).